Here is a 367-residue protein sequence, read N- to C-terminus: UDP-N-acetylglucosamine--N-acetylmuramyl-(pentapeptide) pyrophosphoryl-undecaprenol N-acetylglucosamine transferase (367 aa).

Residues 15 to 17 (TGG), Asn-127, Arg-163, Ser-191, Ile-249, and Gln-294 each bind UDP-N-acetyl-alpha-D-glucosamine.

Belongs to the glycosyltransferase 28 family. MurG subfamily.

The protein resides in the cell inner membrane. The catalysed reaction is di-trans,octa-cis-undecaprenyl diphospho-N-acetyl-alpha-D-muramoyl-L-alanyl-D-glutamyl-meso-2,6-diaminopimeloyl-D-alanyl-D-alanine + UDP-N-acetyl-alpha-D-glucosamine = di-trans,octa-cis-undecaprenyl diphospho-[N-acetyl-alpha-D-glucosaminyl-(1-&gt;4)]-N-acetyl-alpha-D-muramoyl-L-alanyl-D-glutamyl-meso-2,6-diaminopimeloyl-D-alanyl-D-alanine + UDP + H(+). The protein operates within cell wall biogenesis; peptidoglycan biosynthesis. In terms of biological role, cell wall formation. Catalyzes the transfer of a GlcNAc subunit on undecaprenyl-pyrophosphoryl-MurNAc-pentapeptide (lipid intermediate I) to form undecaprenyl-pyrophosphoryl-MurNAc-(pentapeptide)GlcNAc (lipid intermediate II). In Burkholderia pseudomallei (strain 1106a), this protein is UDP-N-acetylglucosamine--N-acetylmuramyl-(pentapeptide) pyrophosphoryl-undecaprenol N-acetylglucosamine transferase.